Reading from the N-terminus, the 49-residue chain is MRVTITLECTQCKHRNYTTTKNKKNDPGRLELKKYCPYCNAHTVHKETK.

Belongs to the bacterial ribosomal protein bL33 family.

The protein is Large ribosomal subunit protein bL33 of Carboxydothermus hydrogenoformans (strain ATCC BAA-161 / DSM 6008 / Z-2901).